Reading from the N-terminus, the 362-residue chain is E3 ubiquitin-protein ligase TM129 (362 aa).

At 1–6 the chain is on the lumenal side; the sequence is MDSPEV. Residues 7-27 traverse the membrane as a helical segment; it reads TFTLAYLVFAVCFVFTPTEFH. The Cytoplasmic portion of the chain corresponds to 28 to 56; that stretch reads SAGLTVQNLLSGWLGSEDAAFVPYHLRRT. Residues 57 to 77 form a helical membrane-spanning segment; the sequence is AATLLCHSLLPLGYYVGMCFA. Over 78-94 the chain is Lumenal; that stretch reads ASEKQLYYPSQTPETWR. Residues 95–115 traverse the membrane as a helical segment; that stretch reads AFLLLALMLPAIACTLIYYWS. The Cytoplasmic portion of the chain corresponds to 116–362; the sequence is RDHWACHPLA…FCVLDVCAVR (247 aa). The segment at 285 to 350 adopts an RING-type; degenerate zinc-finger fold; that stretch reads CIGCMQTQAS…ASRVPCPTCR (66 aa).

The protein belongs to the TMEM129 family. As to quaternary structure, integral component of ER-resident dislocation complexes.

The protein resides in the endoplasmic reticulum membrane. The catalysed reaction is S-ubiquitinyl-[E2 ubiquitin-conjugating enzyme]-L-cysteine + [acceptor protein]-L-lysine = [E2 ubiquitin-conjugating enzyme]-L-cysteine + N(6)-ubiquitinyl-[acceptor protein]-L-lysine.. It participates in protein modification; protein ubiquitination. In terms of biological role, E3 ubiquitin-protein ligase involved in ER-associated protein degradation, preferentially associates with the E2 enzyme UBE2J2. Exploited by viral US11 proteins to mediate HLA class I proteins degradation. The chain is E3 ubiquitin-protein ligase TM129 (TMEM129) from Bos taurus (Bovine).